The following is a 201-amino-acid chain: Pyridoxal 5'-phosphate synthase subunit PdxT (201 aa).

49–51 (GES) is an L-glutamine binding site. Cys81 (nucleophile) is an active-site residue. Residues Arg110 and 139 to 140 (IR) contribute to the L-glutamine site. Residues His175 and Glu177 each act as charge relay system in the active site.

Belongs to the glutaminase PdxT/SNO family. In terms of assembly, in the presence of PdxS, forms a dodecamer of heterodimers. Only shows activity in the heterodimer.

It catalyses the reaction aldehydo-D-ribose 5-phosphate + D-glyceraldehyde 3-phosphate + L-glutamine = pyridoxal 5'-phosphate + L-glutamate + phosphate + 3 H2O + H(+). The catalysed reaction is L-glutamine + H2O = L-glutamate + NH4(+). It functions in the pathway cofactor biosynthesis; pyridoxal 5'-phosphate biosynthesis. In terms of biological role, catalyzes the hydrolysis of glutamine to glutamate and ammonia as part of the biosynthesis of pyridoxal 5'-phosphate. The resulting ammonia molecule is channeled to the active site of PdxS. In Streptomyces avermitilis (strain ATCC 31267 / DSM 46492 / JCM 5070 / NBRC 14893 / NCIMB 12804 / NRRL 8165 / MA-4680), this protein is Pyridoxal 5'-phosphate synthase subunit PdxT.